The chain runs to 361 residues: G-protein coupled receptor 52 (361 aa).

Topologically, residues 1–44 (MNESRWTEWRILNMSSSIVNVSEHHSCPLGFGHYSVEDVCIFET) are extracellular. Residues Asn2, Asn13, and Asn20 are each glycosylated (N-linked (GlcNAc...) asparagine). The chain crosses the membrane as a helical span at residues 45-65 (VVIVLLTFLIISGNLTVIFVF). The Cytoplasmic portion of the chain corresponds to 66 to 81 (HCAPLLHHYTTSYFIQ). The helical transmembrane segment at 82–102 (TMAYADLLVGVTCLVPTLSLL) threads the bilayer. Residues 103–115 (HYSTGVHESLTCQ) are Extracellular-facing. A disulfide bond links Cys114 and Cys193. Residues 116 to 136 (VFGYIISVLKSVSMACLACIS) form a helical membrane-spanning segment. Topologically, residues 137–159 (VDRYLAITKPLSYNQLVTPCRLR) are cytoplasmic. A helical transmembrane segment spans residues 160–180 (ICIIMIWIYSCLIFLPSFFGW). The Extracellular portion of the chain corresponds to 181-205 (GKPGYHGDIFEWCATSWLTSAYFTC). A helical transmembrane segment spans residues 206 to 226 (FIVCLLYAPAALVVCFTYFHI). Residues 227–265 (FKICRQHTKEINDRRARFPSHEVEASREAGHSPDRRYAM) lie on the Cytoplasmic side of the membrane. A helical transmembrane segment spans residues 266 to 286 (VLFRITSVFYMLWLPYIIYFL). Over 287 to 296 (LESSRVLDNP) the chain is Extracellular. A helical membrane pass occupies residues 297–317 (TLSFLTTWLAISNSFCNCVIY). Topologically, residues 318–361 (SLSNSVFRLGLRRLSETMCTSCVCAKDQEAQDPKPRRRANSCSI) are cytoplasmic.

This sequence belongs to the G-protein coupled receptor 1 family. In terms of tissue distribution, expressed in brain, especially in striatum. Expressed in the striatum, nucleus accumbens, and lateral globus pallidus.

It is found in the cell membrane. G- protein coupled receptor activated by antipsychotics reserpine leading to an increase in intracellular cAMP and its internalization. May play a role in locomotor activity through modulation of dopamine, NMDA and ADORA2A-induced locomotor activity. These behavioral changes are accompanied by modulation of the dopamine receptor signaling pathway in striatum. Modulates HTT level via cAMP-dependent but PKA independent mechanisms throught activation of RAB39B that translocates HTT to the endoplasmic reticulum, thus avoiding proteasome degradation. The protein is G-protein coupled receptor 52 of Mus musculus (Mouse).